Consider the following 204-residue polypeptide: Inactive ribonuclease-like protein 9 (204 aa).

Positions 1-26 (MMRTLITTHPLLLLLLLQQLLQPVQL) are cleaved as a signal peptide. Cystine bridges form between cysteine 97–cysteine 152, cysteine 115–cysteine 167, and cysteine 122–cysteine 129. Residues asparagine 130 and asparagine 142 are each glycosylated (N-linked (GlcNAc...) asparagine).

This sequence belongs to the pancreatic ribonuclease family.

It localises to the secreted. Functionally, does not exhibit any ribonuclease activity. In Chlorocebus aethiops (Green monkey), this protein is Inactive ribonuclease-like protein 9 (RNASE9).